Reading from the N-terminus, the 225-residue chain is Urease accessory protein UreG (225 aa).

25–32 (GPVGAGKT) serves as a coordination point for GTP.

It belongs to the SIMIBI class G3E GTPase family. UreG subfamily. In terms of assembly, homodimer. UreD, UreF and UreG form a complex that acts as a GTP-hydrolysis-dependent molecular chaperone, activating the urease apoprotein by helping to assemble the nickel containing metallocenter of UreC. The UreE protein probably delivers the nickel.

The protein resides in the cytoplasm. Its function is as follows. Facilitates the functional incorporation of the urease nickel metallocenter. This process requires GTP hydrolysis, probably effectuated by UreG. This Haemophilus influenzae (strain ATCC 51907 / DSM 11121 / KW20 / Rd) protein is Urease accessory protein UreG.